A 361-amino-acid polypeptide reads, in one-letter code: 3-dehydroquinate synthase (361 aa).

Residues 72 to 77 (SGEKEK), 130 to 131 (TT), Lys142, and Lys151 each bind NAD(+). Positions 184, 247, and 264 each coordinate Zn(2+).

Belongs to the sugar phosphate cyclases superfamily. Dehydroquinate synthase family. Requires NAD(+) as cofactor. It depends on Co(2+) as a cofactor. Zn(2+) serves as cofactor.

Its subcellular location is the cytoplasm. The enzyme catalyses 7-phospho-2-dehydro-3-deoxy-D-arabino-heptonate = 3-dehydroquinate + phosphate. It participates in metabolic intermediate biosynthesis; chorismate biosynthesis; chorismate from D-erythrose 4-phosphate and phosphoenolpyruvate: step 2/7. In terms of biological role, catalyzes the conversion of 3-deoxy-D-arabino-heptulosonate 7-phosphate (DAHP) to dehydroquinate (DHQ). In Bacillus cereus (strain ATCC 14579 / DSM 31 / CCUG 7414 / JCM 2152 / NBRC 15305 / NCIMB 9373 / NCTC 2599 / NRRL B-3711), this protein is 3-dehydroquinate synthase.